The sequence spans 511 residues: Cytochrome P450 4B1 (511 aa).

Glutamate 315 lines the heme pocket. The residue at position 436 (serine 436) is a Phosphoserine. Heme is bound at residue cysteine 453.

This sequence belongs to the cytochrome P450 family. It depends on heme as a cofactor. Detected in the liver and lung (at protein level).

It localises to the endoplasmic reticulum membrane. Its subcellular location is the microsome membrane. The catalysed reaction is an organic molecule + reduced [NADPH--hemoprotein reductase] + O2 = an alcohol + oxidized [NADPH--hemoprotein reductase] + H2O + H(+). Functionally, cytochromes P450 are a group of heme-thiolate monooxygenases. In liver microsomes, this enzyme is involved in an NADPH-dependent electron transport pathway. It oxidizes a variety of structurally unrelated compounds, including steroids, fatty acids, and xenobiotics. In Homo sapiens (Human), this protein is Cytochrome P450 4B1 (CYP4B1).